The sequence spans 104 residues: Synaptic plasticity regulator PANTS (104 aa).

Residues 58 to 104 form a disordered region; sequence RRSAEAQADSLPPGPEGEPRVAGAGPNAVTGILTRNQGTERPHGDTR. Positions 95–104 are enriched in basic and acidic residues; the sequence is GTERPHGDTR.

Belongs to the UPF0545 family. In terms of assembly, interacts with RTN4 isoform A/Nogo-A; the interaction results in enhanced RTN4-mediated inhibition of AMPA receptor clustering. Also interacts with NCAM1, RANBP2 and CCT8. In terms of processing, rapidly degraded by proteolysis following neuronal stimulation, resulting in increased AMPA receptor clustering.

It is found in the synapse. The protein localises to the synaptic cleft. Negatively regulates long-term potentiation and modulates adult synaptic plasticity. Stabilizes the interaction of RTN4 isoform A/Nogo-A with its receptors, inhibiting clustering of postsynaptic AMPA receptors at synaptic sites. Upon neuronal stimulation, degraded at synapses, reducing RTN4 signaling and allowing AMPA receptor clustering at individual synapses. The protein is Synaptic plasticity regulator PANTS of Bos taurus (Bovine).